The primary structure comprises 610 residues: Sterol O-acyltransferase 1 (610 aa).

A phosphoserine mark is found at Ser21 and Ser45. The segment at 41–81 (SMEVSPRSSTTSLVEPVESTEGVESTEAERVAGKQEQEEEY) is disordered. Residues 67-76 (EAERVAGKQE) are compositionally biased toward basic and acidic residues. 5 consecutive transmembrane segments (helical) span residues 182–202 (LESN…WIAI), 229–249 (LFTI…VVFV), 264–284 (GFVA…PIYV), 371–391 (ISCS…QINY), and 409–429 (IIGT…PVAM). An FYXDWWN motif motif is present at residues 491–497 (FYGDWWN). A run of 2 helical transmembrane segments spans residues 535–555 (ATLF…FAIF) and 590–610 (VVFS…YLTL). The active site involves His547.

It belongs to the membrane-bound acyltransferase family. Sterol o-acyltransferase subfamily.

It is found in the endoplasmic reticulum membrane. It carries out the reaction lanosterol + an acyl-CoA = lanosteryl ester + CoA. In terms of biological role, sterol O-acyltransferase that catalyzes the formation of stery esters. The polypeptide is Sterol O-acyltransferase 1 (Saccharomyces cerevisiae (strain ATCC 204508 / S288c) (Baker's yeast)).